A 3032-amino-acid chain; its full sequence is Compactin nonaketide synthase, polyketide synthase component (3032 aa).

The Ketosynthase family 3 (KS3) domain occupies 8-447 (NEPIVVVGSG…GTNAHAIIEE (440 aa)). Catalysis depends on for beta-ketoacyl synthase activity residues Cys181, His320, and His367. The acyl and malonyl transferase stretch occupies residues 560–901 (VFTGQGAQWP…GYIWERFGVR (342 aa)). Ser654 serves as the catalytic For malonyltransferase activity. Positions 953 to 1089 (HLLLGKLSSY…GQIVITLGEA (137 aa)) are N-terminal hotdog fold. In terms of domain architecture, PKS/mFAS DH spans 953–1261 (HLLLGKLSSY…FKPFSPPTAS (309 aa)). His985 functions as the Proton acceptor; for dehydratase activity in the catalytic mechanism. The interval 985–997 (HALQGQTVFPAAG) is dehydratase-like. The segment at 1106 to 1261 (MNNVNIDFFY…FKPFSPPTAS (156 aa)) is C-terminal hotdog fold. Residue Asp1168 is the Proton donor; for dehydratase activity of the active site. The methyltransferase stretch occupies residues 1506–1544 (YDLIIASDVLHASSNFEEKLAHIRSLLKPGGHLVTFGVT). Positions 2441 to 2520 (DQVRQIVIDG…DLADDAATRL (80 aa)) constitute a Carrier domain. O-(pantetheine 4'-phosphoryl)serine is present on Ser2480. Residues 2531 to 2580 (IGDSTGTSDSGASPTPTDSHDEASSATSTDASSAEEDEEQEDDNEQGGRK) are disordered. Positions 2532–2547 (GDSTGTSDSGASPTPT) are enriched in low complexity. Residues 2563–2575 (SAEEDEEQEDDNE) are compositionally biased toward acidic residues. The segment at 2586 to 2946 (RLSLGQEYSW…PKTQTHAPLF (361 aa)) is peptide synthetase elongation.

The cofactor is pantetheine 4'-phosphate.

It carries out the reaction holo-[compactin nonaketide synthase] + 9 malonyl-CoA + 11 NADPH + 20 H(+) = dihydro-ML-236C-[compactin nonaketide synthase] + 9 CO2 + 11 NADP(+) + 9 CoA + 6 H2O. The protein operates within polyketide biosynthesis. Its function is as follows. Nonaketide synthase; part of the gene cluster that mediates the biosynthesis of compactin, also known as mevastatin or ML-236B, and which acts as a potent competitive inhibitor of HMG-CoA reductase. Compactin biosynthesis is performed in two stages. The first stage is catalyzed by the nonaketide synthase mlcA, which belongs to type I polyketide synthases and catalyzes the iterative nine-step formation of the polyketide. This PKS stage is completed by the action of dehydrogenase mlcG, which catalyzes the NADPH-dependent reduction of the unsaturated tetra-, penta- and heptaketide intermediates that arise during the mlcA-mediated biosynthesis of the nonaketide chain and leads to dihydro-ML-236C carboxylate. Covalently bound dihydro-ML-236C carboxylate is released from mlcA by the mlcF esterase. Conversion of dihydro-ML-236C carboxylate into ML-236A carboxylate is subsequently performed with the participation of molecular oxygen and P450 monoogygenase mlcC. Finally, mlcH performs the conversion of ML-236A carboxylate to ML-236B/compactin carboxylate through the addition of the side-chain diketide moiety produced by the diketide synthase mlcB. This chain is Compactin nonaketide synthase, polyketide synthase component, found in Penicillium citrinum.